The sequence spans 300 residues: 4-diphosphocytidyl-2-C-methyl-D-erythritol kinase (300 aa).

Lysine 17 is an active-site residue. Position 102-112 (102-112 (PVAAGIGGGSA)) interacts with ATP. Aspartate 144 is an active-site residue.

Belongs to the GHMP kinase family. IspE subfamily.

It catalyses the reaction 4-CDP-2-C-methyl-D-erythritol + ATP = 4-CDP-2-C-methyl-D-erythritol 2-phosphate + ADP + H(+). It functions in the pathway isoprenoid biosynthesis; isopentenyl diphosphate biosynthesis via DXP pathway; isopentenyl diphosphate from 1-deoxy-D-xylulose 5-phosphate: step 3/6. Functionally, catalyzes the phosphorylation of the position 2 hydroxy group of 4-diphosphocytidyl-2C-methyl-D-erythritol. The protein is 4-diphosphocytidyl-2-C-methyl-D-erythritol kinase of Bradyrhizobium sp. (strain ORS 278).